Consider the following 1102-residue polypeptide: Centrosomal protein of 128 kDa (1102 aa).

3 positions are modified to phosphoserine: Ser-31, Ser-248, and Ser-290. Coiled-coil stretches lie at residues 215–822 (VSDR…LETE) and 878–959 (EELK…ALQM). Residues 326–346 (QHQVPCISKQPLSHQDDQGDD) are disordered. 2 disordered regions span residues 991-1048 (SEKT…DHSR) and 1070-1102 (DPASIEGDTTSLPANGTSPQSKKEEHEIKKYKK). Residues 1009–1027 (QQRRDDTKPRIKSFRDDRP) are compositionally biased toward basic and acidic residues. 2 stretches are compositionally biased toward polar residues: residues 1039 to 1048 (HSSSCQDHSR) and 1076 to 1089 (GDTTSLPANGTSPQ). Over residues 1090-1102 (SKKEEHEIKKYKK) the composition is skewed to basic and acidic residues.

It is found in the cytoplasm. The protein resides in the cytoskeleton. Its subcellular location is the microtubule organizing center. The protein localises to the centrosome. It localises to the centriole. It is found in the spindle pole. This is Centrosomal protein of 128 kDa (Cep128) from Mus musculus (Mouse).